The following is a 264-amino-acid chain: Thiazole synthase (264 aa).

The active-site Schiff-base intermediate with DXP is Lys-106. 1-deoxy-D-xylulose 5-phosphate-binding positions include Gly-167, 193–194, and 215–216; these read AG and NT.

Belongs to the ThiG family. Homotetramer. Forms heterodimers with either ThiH or ThiS.

The protein localises to the cytoplasm. The enzyme catalyses [ThiS sulfur-carrier protein]-C-terminal-Gly-aminoethanethioate + 2-iminoacetate + 1-deoxy-D-xylulose 5-phosphate = [ThiS sulfur-carrier protein]-C-terminal Gly-Gly + 2-[(2R,5Z)-2-carboxy-4-methylthiazol-5(2H)-ylidene]ethyl phosphate + 2 H2O + H(+). Its pathway is cofactor biosynthesis; thiamine diphosphate biosynthesis. Its function is as follows. Catalyzes the rearrangement of 1-deoxy-D-xylulose 5-phosphate (DXP) to produce the thiazole phosphate moiety of thiamine. Sulfur is provided by the thiocarboxylate moiety of the carrier protein ThiS. In vitro, sulfur can be provided by H(2)S. In Xanthomonas axonopodis pv. citri (strain 306), this protein is Thiazole synthase.